The sequence spans 171 residues: MEVILIKPVRKLGKIGDILKVADGFGRNYLLPQKLAIRATKSNKELIVKQKYEFEEKDKQVREEVEKINTIIKDQQLVFIRQTSDDCKLFGSVTNKDIADKLSKNISYNISHSNIILDKQIKSTGIYTVEIRLHAELTSIVTVVVARSESEAQDYLREQKAETLEDVDETA.

The protein belongs to the bacterial ribosomal protein bL9 family.

Binds to the 23S rRNA. The polypeptide is Large ribosomal subunit protein bL9 (Rickettsia prowazekii (strain Madrid E)).